The chain runs to 315 residues: Ribosomal RNA small subunit methyltransferase H (315 aa).

Residues 36 to 38 (GGH), Asp56, Phe80, Asp102, and Gln109 contribute to the S-adenosyl-L-methionine site.

Belongs to the methyltransferase superfamily. RsmH family.

Its subcellular location is the cytoplasm. It catalyses the reaction cytidine(1402) in 16S rRNA + S-adenosyl-L-methionine = N(4)-methylcytidine(1402) in 16S rRNA + S-adenosyl-L-homocysteine + H(+). Its function is as follows. Specifically methylates the N4 position of cytidine in position 1402 (C1402) of 16S rRNA. The sequence is that of Ribosomal RNA small subunit methyltransferase H from Proteus mirabilis (strain HI4320).